The sequence spans 155 residues: Phytohormone-binding protein CSBP (155 aa).

Residues Leu-22, Gln-67, Glu-69, and 139-142 contribute to the trans-zeatin site; that span reads TLMY. Residue Gln-67 participates in gibberellin A3 binding. A gibberellin A3-binding site is contributed by Thr-139.

The protein belongs to the BetVI family. Monomer.

Its function is as follows. Binds the cytokinin trans-zeatin in vitro. Binds gibberellin A3 (GA3) in vitro. This chain is Phytohormone-binding protein CSBP, found in Vigna radiata var. radiata (Mung bean).